The following is a 2273-amino-acid chain: Acetyl-CoA carboxylase, mitochondrial (2273 aa).

Residues 1 to 104 constitute a mitochondrion transit peptide; it reads KGKTITHGQS…RGNIHKHTRL (104 aa). The region spanning 134 to 635 is the Biotin carboxylation domain; it reads VISKILIANN…STGWLDDLIL (502 aa). The region spanning 292-484 is the ATP-grasp domain; sequence KTNFVSVPDD…LPATQLQIAM (193 aa). Position 332–337 (332–337) interacts with ATP; sequence GGGGKG. Arg459 is a catalytic residue. One can recognise a Biotinyl-binding domain in the interval 763-837; that stretch reads LEAELNPTQV…EAGDVIAKLT (75 aa). Residue Lys804 is modified to N6-biotinyllysine. The region spanning 1532 to 1867 is the CoA carboxyltransferase N-terminal domain; sequence PYSVKDWLQP…KRDMSPPLLE (336 aa). Residues 1532 to 2187 form a carboxyltransferase region; sequence PYSVKDWLQP…EGQVIKRLQK (656 aa). CoA-binding residues include Arg1776, Lys2080, and Arg2082. Residues 1871–2187 form the CoA carboxyltransferase C-terminal domain; that stretch reads RWDRDVDFKP…EGQVIKRLQK (317 aa).

The cofactor is biotin.

It is found in the mitochondrion. It catalyses the reaction hydrogencarbonate + acetyl-CoA + ATP = malonyl-CoA + ADP + phosphate + H(+). The enzyme catalyses N(6)-biotinyl-L-lysyl-[protein] + hydrogencarbonate + ATP = N(6)-carboxybiotinyl-L-lysyl-[protein] + ADP + phosphate + H(+). It functions in the pathway lipid metabolism; malonyl-CoA biosynthesis; malonyl-CoA from acetyl-CoA: step 1/1. Catalyzes the rate-limiting reaction in the mitochondrial fatty acid synthesis (FAS) type II pathway. Responsible for the production of the mitochondrial malonyl-CoA, used for the biosynthesis of the cofactor lipoic acid. This protein carries three functions: biotin carboxyl carrier protein, biotin carboxylase, and carboxyltransferase. The protein is Acetyl-CoA carboxylase, mitochondrial (HFA1) of Saccharomyces cerevisiae (strain RM11-1a) (Baker's yeast).